The sequence spans 250 residues: MRVDVLTIFPEMFTGFLNTSIIKRAREQGRLEVNLVNIRAYARNKHRNVDDYPFGGGPGMVMQAEPLFLAVEDLLPGGEAARPPVILMSPQGEAFNQGMAEELAREEHLILICGHYEGVDERVRLALVTREISIGDYVLTGGELPAMVIIDAVTRLLPGVLGAPEGAREDSFAMGLLEYPQYTRPRSFRGLEVPEVLLSGNHEQIRRWRRQQALERTWRRRPDLLARVNLSPEDRRFLEEISRREGERTP.

Residues glycine 114 and 134–139 (IGDYVL) each bind S-adenosyl-L-methionine.

This sequence belongs to the RNA methyltransferase TrmD family. Homodimer.

It localises to the cytoplasm. The enzyme catalyses guanosine(37) in tRNA + S-adenosyl-L-methionine = N(1)-methylguanosine(37) in tRNA + S-adenosyl-L-homocysteine + H(+). Its function is as follows. Specifically methylates guanosine-37 in various tRNAs. This is tRNA (guanine-N(1)-)-methyltransferase from Moorella thermoacetica (strain ATCC 39073 / JCM 9320).